We begin with the raw amino-acid sequence, 81 residues long: UPF0298 protein SAK_1599 (81 aa).

The protein belongs to the UPF0298 family.

It localises to the cytoplasm. This is UPF0298 protein SAK_1599 from Streptococcus agalactiae serotype Ia (strain ATCC 27591 / A909 / CDC SS700).